The primary structure comprises 378 residues: UPF0754 membrane protein BCQ_0944 (378 aa).

The next 2 helical transmembrane spans lie at Met-1–Thr-21 and Tyr-357–Leu-377.

Belongs to the UPF0754 family.

The protein resides in the cell membrane. In Bacillus cereus (strain Q1), this protein is UPF0754 membrane protein BCQ_0944.